The primary structure comprises 851 residues: Probable disease resistance protein At1g15890 (851 aa).

One can recognise an NB-ARC domain in the interval 139–441 (AEKIPAPKVE…CEGFIDGNED (303 aa)). Residue 181–188 (GMGGVGKT) participates in ATP binding. LRR repeat units lie at residues 514 to 535 (SLRR…SNSP), 536 to 557 (NLST…FFRF), 560 to 582 (ALVV…ISKL), 584 to 605 (SLQY…FKEL), and 607 to 629 (KLIH…ATSL).

This sequence belongs to the disease resistance NB-LRR family.

In terms of biological role, probable disease resistance protein. This Arabidopsis thaliana (Mouse-ear cress) protein is Probable disease resistance protein At1g15890.